The following is a 249-amino-acid chain: Flavin-dependent thymidylate synthase (249 aa).

In terms of domain architecture, ThyX spans 8–225 (VKVKLLEYTP…PNLFKYSGPS (218 aa)). Residues Ser-62, 86 to 88 (RHR), and Gln-94 each bind FAD. DUMP contacts are provided by residues 83-86 (QLVR), 94-98 (QQSQR), and Arg-164. Positions 86 to 96 (RHRIASYSQQS) match the ThyX motif motif. FAD-binding positions include 180–182 (NAR) and Asn-186. Arg-191 contacts dUMP. Arg-191 serves as the catalytic Involved in ionization of N3 of dUMP, leading to its activation.

This sequence belongs to the thymidylate synthase ThyX family. In terms of assembly, homotetramer. FAD is required as a cofactor.

It carries out the reaction dUMP + (6R)-5,10-methylene-5,6,7,8-tetrahydrofolate + NADPH + H(+) = dTMP + (6S)-5,6,7,8-tetrahydrofolate + NADP(+). It functions in the pathway pyrimidine metabolism; dTTP biosynthesis. Its function is as follows. Catalyzes the reductive methylation of 2'-deoxyuridine-5'-monophosphate (dUMP) to 2'-deoxythymidine-5'-monophosphate (dTMP) while utilizing 5,10-methylenetetrahydrofolate (mTHF) as the methyl donor, and NADPH and FADH(2) as the reductant. This is Flavin-dependent thymidylate synthase from Clostridium tetani (strain Massachusetts / E88).